A 137-amino-acid chain; its full sequence is Large ribosomal subunit protein uL16c (137 aa).

This sequence belongs to the universal ribosomal protein uL16 family. In terms of assembly, part of the 50S ribosomal subunit.

It localises to the plastid. The protein resides in the chloroplast. The chain is Large ribosomal subunit protein uL16c from Trieres chinensis (Marine centric diatom).